Consider the following 346-residue polypeptide: D-alanine--D-alanine ligase (346 aa).

Positions 133 to 327 (KLYAKSVGVK…TLADQIPLEK (195 aa)) constitute an ATP-grasp domain. Position 159–211 (159–211 (LRFPCIIKPARLGSSIGISIVKDEKDLEYAKDVGFEFDNDLVVEEFKNNIKEY)) interacts with ATP. 3 residues coordinate Mg(2+): D284, E296, and N298.

Belongs to the D-alanine--D-alanine ligase family. Requires Mg(2+) as cofactor. The cofactor is Mn(2+).

It localises to the cytoplasm. The catalysed reaction is 2 D-alanine + ATP = D-alanyl-D-alanine + ADP + phosphate + H(+). It participates in cell wall biogenesis; peptidoglycan biosynthesis. Cell wall formation. The sequence is that of D-alanine--D-alanine ligase from Campylobacter jejuni subsp. doylei (strain ATCC BAA-1458 / RM4099 / 269.97).